The chain runs to 179 residues: UPF0227 protein SO_2251 (179 aa).

This sequence belongs to the UPF0227 family.

In Shewanella oneidensis (strain ATCC 700550 / JCM 31522 / CIP 106686 / LMG 19005 / NCIMB 14063 / MR-1), this protein is UPF0227 protein SO_2251.